The chain runs to 122 residues: Small ribosomal subunit protein uS13 (122 aa).

Residues 95 to 122 (GLPVRGQRTKTNARTRKGPKKTIAGKKK) are disordered.

The protein belongs to the universal ribosomal protein uS13 family. In terms of assembly, part of the 30S ribosomal subunit. Forms a loose heterodimer with protein S19. Forms two bridges to the 50S subunit in the 70S ribosome.

In terms of biological role, located at the top of the head of the 30S subunit, it contacts several helices of the 16S rRNA. In the 70S ribosome it contacts the 23S rRNA (bridge B1a) and protein L5 of the 50S subunit (bridge B1b), connecting the 2 subunits; these bridges are implicated in subunit movement. Contacts the tRNAs in the A and P-sites. This Corynebacterium aurimucosum (strain ATCC 700975 / DSM 44827 / CIP 107346 / CN-1) (Corynebacterium nigricans) protein is Small ribosomal subunit protein uS13.